A 594-amino-acid polypeptide reads, in one-letter code: Adenine deaminase 1 (594 aa).

This sequence belongs to the metallo-dependent hydrolases superfamily. Adenine deaminase family. It depends on Mn(2+) as a cofactor.

The catalysed reaction is adenine + H2O + H(+) = hypoxanthine + NH4(+). This Latilactobacillus sakei subsp. sakei (strain 23K) (Lactobacillus sakei subsp. sakei) protein is Adenine deaminase 1.